Reading from the N-terminus, the 422-residue chain is Zinc finger protein Gfi-1 (422 aa).

An SNAG domain region spans residues 1-20 (MPRSFLVKSKKAHSYHQPRS). The disordered stretch occupies residues 1-107 (MPRSFLVKSK…SPASEKSVCP (107 aa)). Phosphoserine is present on serine 20. Residues 34–47 (APGGADGTSSAGGA) show a composition bias toward low complexity. Residue serine 56 is modified to Phosphoserine. Residues 57-72 (PESQLTEAPDRSSASP) show a composition bias toward polar residues. Residues 140-257 (RPCAALDRGA…LLLGGGSYKC (118 aa)) form a required for interaction with RELA region. 6 C2H2-type zinc fingers span residues 255 to 278 (YKCI…RRSH), 284 to 306 (FACE…KAVH), 312 to 334 (FDCK…LLIH), 340 to 362 (YPCQ…TFIH), 368 to 390 (HKCQ…SRKH), and 396 to 419 (FGCD…ETQH).

In terms of assembly, interacts with U2AF1L4. Component of RCOR-GFI-KDM1A-HDAC complexes. Interacts directly with RCOR1, KDM1A and HDAC2. Also interacts with HDAC1 and HDAC3. Interacts (via the zinc-finger domain) with ARIH2; the interaction prevents GFI1 ubiquitination and proteasomal degradation. Interacts with PIAS3; the interaction relieves the inhibitory effect of PIAS3 on STAT3-mediated transcriptional activity. Forms a complex with EHMT2 and HDAC1 to promote 'Lys-9' dimethylation of H3 (H3K9Me2) and repress expression of target genes. Interacts directly with EHMT2. Component of the GFI1-AJUBA-HDAC1 repressor complex. Interacts directly with AJUBA (via ITS LIM domains); the interaction results in the HDAC-dependent corepression of a subset of GFI1 target genes and, occurs independently of the SNAG domain. Interacts with SPI1; the interaction inhibits SPI1 transcriptional activity targeted at macrophage-specific genes, repressing macrophage differentiation of myeloid progenitor cells and promoting granulocyte commitment. Interacts with RUNX1T1; the interaction represses HDAC-mediated transcriptional activity. Interacts with RELA; the interaction occurs on liposaccharide (LPS) stimulation and controls RELA DNA binding activity and regulates endotoxin-mediated TOLL-like receptor inflammatory response. Interacts (via the C-terminal zinc fingers) with ZBTB17; the interaction results in the recruitment of GFI1 to the CDKN1A/p21 and CDKNIB promoters and repression of transcription. Post-translationally, ubiquitinated.

Its subcellular location is the nucleus. Its function is as follows. Transcription repressor essential for hematopoiesis. Functions in a cell-context and development-specific manner. Binds to 5'-TAAATCAC[AT]GCA-3' in the promoter region of a large number of genes. Component of several complexes, including the EHMT2-GFI1-HDAC1, AJUBA-GFI1-HDAC1 and RCOR-GFI-KDM1A-HDAC complexes, that suppress, via histone deacetylase (HDAC) recruitment, a number of genes implicated in multilineage blood cell development. Regulates neutrophil differentiation, promotes proliferation of lymphoid cells, and is required for granulocyte development. Inhibits SPI1 transcriptional activity at macrophage-specific genes, repressing macrophage differentiation of myeloid progenitor cells and promoting granulocyte commitment. Mediates, together with U2AF1L4, the alternative splicing of CD45 and controls T-cell receptor signaling. Regulates the endotoxin-mediated Toll-like receptor (TLR) inflammatory response by antagonizing RELA. Cooperates with CBFA2T2 to regulate ITGB1-dependent neurite growth. Controls cell-cycle progression by repressing CDKNIA/p21 transcription in response to TGFB1 via recruitment of GFI1 by ZBTB17 to the CDKNIA/p21 and CDKNIB promoters. Required for the maintenance of inner ear hair cells. In addition to its role in transcription, acts as a substrate adapter for PRMT1 in the DNA damage response: facilitates the recognition of TP53BP1 and MRE11 substrates by PRMT1, promoting their methylation and the DNA damage response. The protein is Zinc finger protein Gfi-1 (GFI1) of Canis lupus familiaris (Dog).